A 72-amino-acid polypeptide reads, in one-letter code: Small ribosomal subunit protein bS18 (72 aa).

The protein belongs to the bacterial ribosomal protein bS18 family. As to quaternary structure, part of the 30S ribosomal subunit. Forms a tight heterodimer with protein bS6.

Binds as a heterodimer with protein bS6 to the central domain of the 16S rRNA, where it helps stabilize the platform of the 30S subunit. The polypeptide is Small ribosomal subunit protein bS18 (Francisella tularensis subsp. novicida (strain U112)).